The sequence spans 416 residues: Coenzyme F420H(2) oxidase (416 aa).

Fe cation contacts are provided by H87, E89, D91, H92, H155, D174, and H239. The 142-residue stretch at 266–407 folds into the Flavodoxin-like domain; that stretch reads AVIVYDTMHY…NCYNMGKELA (142 aa). Residues 272 to 277, 324 to 327, and 359 to 364 each bind FMN; these read TMHYST, TIYD, and SMGGEG.

It in the N-terminal section; belongs to the zinc metallo-hydrolase group 3 family. Requires FMN as cofactor. Fe cation serves as cofactor.

The enzyme catalyses 2 reduced coenzyme F420-(gamma-L-Glu)(n) + O2 = 2 oxidized coenzyme F420-(gamma-L-Glu)(n) + 2 H2O + 2 H(+). In terms of biological role, catalyzes the oxidation of F420H(2) with O(2). May be involved in O(2) detoxification, reducing the intracellular O(2) concentration to a level allowing growth at the expense of methane formation. This chain is Coenzyme F420H(2) oxidase (fprA), found in Methanocaldococcus jannaschii (strain ATCC 43067 / DSM 2661 / JAL-1 / JCM 10045 / NBRC 100440) (Methanococcus jannaschii).